The sequence spans 583 residues: Alpha-1,3-arabinosyltransferase XAT2 (583 aa).

The Cytoplasmic segment spans residues 1–21 (MKPVERAKLVRSLRQESRRLR). The chain crosses the membrane as a helical; Signal-anchor for type II membrane protein span at residues 22-42 (LLVLVIGFFLVTLTFVVISKP). Topologically, residues 43 to 583 (DALLFNLNGR…LLEVLDQLNQ (541 aa)) are lumenal. The disordered stretch occupies residues 73-178 (RRSADTFPAA…NGKQEDGKPN (106 aa)). Composition is skewed to basic and acidic residues over residues 102–121 (TSEEEKRLLSSEPEQGKNEE) and 135–146 (EDNKNGEEEGHT). The segment covering 149–160 (SKVTLPTVSNYT) has biased composition (polar residues). The N-linked (GlcNAc...) asparagine glycan is linked to Asn-158. Residues 162-178 (RDAEDTDNGKQEDGKPN) show a composition bias toward basic and acidic residues. 4 N-linked (GlcNAc...) asparagine glycosylation sites follow: Asn-229, Asn-382, Asn-450, and Asn-485.

The protein belongs to the glycosyltransferase 61 family.

It localises to the golgi apparatus membrane. It functions in the pathway glycan metabolism. Glycosyltransferase involved in the arabinosylation of xylan, the major hemicellulose (non-cellulosic component) of primary and secondary walls of angiosperms. Possesses alpha-1,3-arabinosyltransferase activity, transferring an arabinofuranose residue to the xylan backbone. The protein is Alpha-1,3-arabinosyltransferase XAT2 of Oryza sativa subsp. japonica (Rice).